A 69-amino-acid chain; its full sequence is Cell division protein ZapB (69 aa).

Residues 6-68 (LEQLEARVQS…LGKMDQMNSE (63 aa)) are a coiled coil.

This sequence belongs to the ZapB family. As to quaternary structure, homodimer. The ends of the coiled-coil dimer bind to each other, forming polymers. Interacts with FtsZ.

It localises to the cytoplasm. In terms of biological role, non-essential, abundant cell division factor that is required for proper Z-ring formation. It is recruited early to the divisome by direct interaction with FtsZ, stimulating Z-ring assembly and thereby promoting cell division earlier in the cell cycle. Its recruitment to the Z-ring requires functional FtsA or ZipA. This is Cell division protein ZapB from Tolumonas auensis (strain DSM 9187 / NBRC 110442 / TA 4).